Here is an 89-residue protein sequence, read N- to C-terminus: Small ribosomal subunit protein uS19 (89 aa).

Belongs to the universal ribosomal protein uS19 family.

Its function is as follows. Protein S19 forms a complex with S13 that binds strongly to the 16S ribosomal RNA. The polypeptide is Small ribosomal subunit protein uS19 (Akkermansia muciniphila (strain ATCC BAA-835 / DSM 22959 / JCM 33894 / BCRC 81048 / CCUG 64013 / CIP 107961 / Muc)).